The following is a 273-amino-acid chain: Putative pyruvate, phosphate dikinase regulatory protein (273 aa).

Residue 151–158 (GVSRTSKT) participates in ADP binding.

Belongs to the pyruvate, phosphate/water dikinase regulatory protein family. PDRP subfamily.

It catalyses the reaction N(tele)-phospho-L-histidyl/L-threonyl-[pyruvate, phosphate dikinase] + ADP = N(tele)-phospho-L-histidyl/O-phospho-L-threonyl-[pyruvate, phosphate dikinase] + AMP + H(+). The enzyme catalyses N(tele)-phospho-L-histidyl/O-phospho-L-threonyl-[pyruvate, phosphate dikinase] + phosphate + H(+) = N(tele)-phospho-L-histidyl/L-threonyl-[pyruvate, phosphate dikinase] + diphosphate. Its function is as follows. Bifunctional serine/threonine kinase and phosphorylase involved in the regulation of the pyruvate, phosphate dikinase (PPDK) by catalyzing its phosphorylation/dephosphorylation. In Desulfitobacterium hafniense (strain Y51), this protein is Putative pyruvate, phosphate dikinase regulatory protein.